The following is a 428-amino-acid chain: Trigger factor (428 aa).

In terms of domain architecture, PPIase FKBP-type spans 163 to 248 (GDTAIIDFEG…INDVKVKELS (86 aa)).

Belongs to the FKBP-type PPIase family. Tig subfamily.

The protein localises to the cytoplasm. It carries out the reaction [protein]-peptidylproline (omega=180) = [protein]-peptidylproline (omega=0). Involved in protein export. Acts as a chaperone by maintaining the newly synthesized protein in an open conformation. Functions as a peptidyl-prolyl cis-trans isomerase. The protein is Trigger factor of Clostridioides difficile (strain 630) (Peptoclostridium difficile).